The following is a 218-amino-acid chain: Small ribosomal subunit protein uS3c (218 aa).

The 72-residue stretch at 47-118 (VQKEMRISSG…RLNVVITRVA (72 aa)) folds into the KH type-2 domain.

Belongs to the universal ribosomal protein uS3 family. In terms of assembly, part of the 30S ribosomal subunit.

It is found in the plastid. Its subcellular location is the chloroplast. This chain is Small ribosomal subunit protein uS3c (rps3), found in Ceratophyllum demersum (Rigid hornwort).